The following is a 393-amino-acid chain: Polygalacturonase (393 aa).

The N-terminal stretch at 1–23 is a signal peptide; that stretch reads MANRRSLFSLSLIFVFMINSAIA. 6 PbH1 repeats span residues 115–136, 178–204, 205–226, 228–248, 258–279, and 288–309; these read VNGVTISGGILDGQGTALWACK, FQNVQMQGVRVSRSGNSPNTDGIHVQM, SSGVTILNSKIATGDDCVSIGP, TSNLWIEGVACGPGHGISIGS, VQNVTVKTVTFSGTQNGLRIKS, and ARNILFQHATMVNVENPIVIDQ. Catalysis depends on Asp219, which acts as the Proton donor. Cys221 and Cys238 form a disulfide bridge. The active site involves His242. The N-linked (GlcNAc...) asparagine glycan is linked to Asn260. 2 disulfide bridges follow: Cys349–Cys355 and Cys376–Cys392.

The protein belongs to the glycosyl hydrolase 28 family.

The protein localises to the secreted. It localises to the cell wall. It carries out the reaction (1,4-alpha-D-galacturonosyl)n+m + H2O = (1,4-alpha-D-galacturonosyl)n + (1,4-alpha-D-galacturonosyl)m.. Its function is as follows. Acts in concert with the pectinesterase, in the ripening process. Is involved in cell wall metabolism, specifically in polyuronide degradation. The sequence is that of Polygalacturonase from Prunus persica (Peach).